We begin with the raw amino-acid sequence, 132 residues long: MDHHIPMHALPEEIQKMLPEEKVCKYCGVSYLILHEFKAMEEKVKAMEKEMKFYQGSVDREKRLQEKLHSLSQELEQYKIDNKSKTERIYDVGMQLKSQQNEFQKVKKQLSHLQDELKIKYRQSYIFRLCFC.

Residues 37–116 (FKAMEEKVKA…KKQLSHLQDE (80 aa)) are a coiled coil.

This is Protein LEKR1 (LEKR1) from Homo sapiens (Human).